Consider the following 378-residue polypeptide: Nitronate monooxygenase (378 aa).

Positions 1-15 (MHFPGHSSKKEESAQ) are excised as a propeptide. 37 to 39 (PMY) is an FMN binding site. The Proton acceptor role is filled by H196. Substrate is bound at residue H196. Residues 229 to 231 (AGG) and 252 to 253 (GT) each bind FMN.

It belongs to the nitronate monooxygenase family. NMO class II subfamily. Homodimer. Requires FMN as cofactor.

The enzyme catalyses ethylnitronate + O2 = chemical entity + acetaldehyde + nitrite + H(+). In terms of biological role, catalyzes the oxidation of alkyl nitronates to produce the corresponding carbonyl compounds and nitrites. Anionic forms of nitroalkanes are much better substrates than are neutral forms. The polypeptide is Nitronate monooxygenase (ncd-2) (Neurospora crassa (strain ATCC 24698 / 74-OR23-1A / CBS 708.71 / DSM 1257 / FGSC 987)).